The primary structure comprises 88 residues: Small ribosomal subunit protein bS20 (88 aa).

Residues 1 to 25 (MANTAQALKRIRQTNKARAQNASQR) form a disordered region. Over residues 16–25 (KARAQNASQR) the composition is skewed to polar residues.

It belongs to the bacterial ribosomal protein bS20 family.

Its function is as follows. Binds directly to 16S ribosomal RNA. This chain is Small ribosomal subunit protein bS20, found in Dichelobacter nodosus (strain VCS1703A).